A 417-amino-acid polypeptide reads, in one-letter code: Gamma-glutamyl phosphate reductase (417 aa).

Belongs to the gamma-glutamyl phosphate reductase family.

Its subcellular location is the cytoplasm. The enzyme catalyses L-glutamate 5-semialdehyde + phosphate + NADP(+) = L-glutamyl 5-phosphate + NADPH + H(+). It participates in amino-acid biosynthesis; L-proline biosynthesis; L-glutamate 5-semialdehyde from L-glutamate: step 2/2. Catalyzes the NADPH-dependent reduction of L-glutamate 5-phosphate into L-glutamate 5-semialdehyde and phosphate. The product spontaneously undergoes cyclization to form 1-pyrroline-5-carboxylate. This Escherichia coli O6:K15:H31 (strain 536 / UPEC) protein is Gamma-glutamyl phosphate reductase.